The sequence spans 492 residues: Probable cobyric acid synthase (492 aa).

The GATase cobBQ-type domain occupies 252 to 444; it reads PIEVNIVKFS…FHGILENFEF (193 aa). C330 serves as the catalytic Nucleophile. The active site involves H436.

It belongs to the CobB/CobQ family. CobQ subfamily.

It participates in cofactor biosynthesis; adenosylcobalamin biosynthesis. Its function is as follows. Catalyzes amidations at positions B, D, E, and G on adenosylcobyrinic A,C-diamide. NH(2) groups are provided by glutamine, and one molecule of ATP is hydrogenolyzed for each amidation. In Methanococcus maripaludis (strain C5 / ATCC BAA-1333), this protein is Probable cobyric acid synthase.